We begin with the raw amino-acid sequence, 314 residues long: Olfactory receptor 8D4 (314 aa).

The Extracellular portion of the chain corresponds to Met-1 to Leu-25. Asn-5 carries an N-linked (GlcNAc...) asparagine glycan. Residues Pro-26–Ile-46 form a helical membrane-spanning segment. Topologically, residues Ser-47–Gln-54 are cytoplasmic. Residues Leu-55–Ser-75 traverse the membrane as a helical segment. The Extracellular portion of the chain corresponds to Val-76–Ile-99. Cys-97 and Cys-189 are joined by a disulfide. A helical membrane pass occupies residues Gln-100–Cys-120. The Cytoplasmic portion of the chain corresponds to Asp-121–Arg-139. Residues Val-140–Gly-160 form a helical membrane-spanning segment. Residues Gly-161–Leu-197 lie on the Extracellular side of the membrane. Residues Leu-198–Ser-217 traverse the membrane as a helical segment. Residues Tyr-218–Ala-237 lie on the Cytoplasmic side of the membrane. A helical transmembrane segment spans residues Phe-238 to Met-258. Over Tyr-259 to Glu-271 the chain is Extracellular. The chain crosses the membrane as a helical span at residues Lys-272–Leu-292. Over Arg-293 to Gly-314 the chain is Cytoplasmic.

The protein belongs to the G-protein coupled receptor 1 family.

It is found in the cell membrane. Functionally, odorant receptor. The sequence is that of Olfactory receptor 8D4 (OR8D4) from Homo sapiens (Human).